We begin with the raw amino-acid sequence, 214 residues long: Pyridoxine/pyridoxamine 5'-phosphate oxidase (214 aa).

Substrate-binding positions include 9–12 and K67; that span reads RREY. FMN contacts are provided by residues 62–67, 77–78, R83, K84, and Q106; these read RTVLLK and YS. Positions 124, 128, and 132 each coordinate substrate. FMN is bound by residues 141–142 and W186; that span reads QS. A substrate-binding site is contributed by 192–194; sequence RLH. Position 196 (R196) interacts with FMN.

Belongs to the pyridoxamine 5'-phosphate oxidase family. In terms of assembly, homodimer. The cofactor is FMN.

It catalyses the reaction pyridoxamine 5'-phosphate + O2 + H2O = pyridoxal 5'-phosphate + H2O2 + NH4(+). It carries out the reaction pyridoxine 5'-phosphate + O2 = pyridoxal 5'-phosphate + H2O2. It functions in the pathway cofactor metabolism; pyridoxal 5'-phosphate salvage; pyridoxal 5'-phosphate from pyridoxamine 5'-phosphate: step 1/1. Its pathway is cofactor metabolism; pyridoxal 5'-phosphate salvage; pyridoxal 5'-phosphate from pyridoxine 5'-phosphate: step 1/1. Functionally, catalyzes the oxidation of either pyridoxine 5'-phosphate (PNP) or pyridoxamine 5'-phosphate (PMP) into pyridoxal 5'-phosphate (PLP). In Porphyromonas gingivalis (strain ATCC 33277 / DSM 20709 / CIP 103683 / JCM 12257 / NCTC 11834 / 2561), this protein is Pyridoxine/pyridoxamine 5'-phosphate oxidase.